Reading from the N-terminus, the 157-residue chain is MASGDIATVANAELDLPYGSALTSSGRISAVTEPGELSVHYPFPTMDLVVLDDALKYGSRAAKARFAVYIGPLGADTAATAREILANVPTPENAVLLAVSPDQRAIEVVYGADVKGRGIESAAPLGVSAAAASFKEGNLIDGLISAVRVMSAGVSPA.

Lys-115 participates in a covalent cross-link: Isoglutamyl lysine isopeptide (Lys-Gln) (interchain with Q-Cter in protein Pup).

This is an uncharacterized protein from Mycolicibacterium smegmatis (strain ATCC 700084 / mc(2)155) (Mycobacterium smegmatis).